The primary structure comprises 278 residues: TnpB-like protein MJ0751 (278 aa).

Cysteine 222, cysteine 225, cysteine 239, and cysteine 242 together coordinate Zn(2+).

It in the N-terminal section; belongs to the transposase 2 family. In the C-terminal section; belongs to the transposase 35 family.

This Methanocaldococcus jannaschii (strain ATCC 43067 / DSM 2661 / JAL-1 / JCM 10045 / NBRC 100440) (Methanococcus jannaschii) protein is TnpB-like protein MJ0751.